Reading from the N-terminus, the 427-residue chain is Glutamate-1-semialdehyde 2,1-aminomutase (427 aa).

Residue K265 is modified to N6-(pyridoxal phosphate)lysine.

The protein belongs to the class-III pyridoxal-phosphate-dependent aminotransferase family. HemL subfamily. Homodimer. Requires pyridoxal 5'-phosphate as cofactor.

It is found in the cytoplasm. It catalyses the reaction (S)-4-amino-5-oxopentanoate = 5-aminolevulinate. It functions in the pathway porphyrin-containing compound metabolism; protoporphyrin-IX biosynthesis; 5-aminolevulinate from L-glutamyl-tRNA(Glu): step 2/2. The polypeptide is Glutamate-1-semialdehyde 2,1-aminomutase (Colwellia psychrerythraea (strain 34H / ATCC BAA-681) (Vibrio psychroerythus)).